The sequence spans 312 residues: L-lactate dehydrogenase (312 aa).

The NAD(+) site is built by V14, D35, and Y66. Residues Q83 and R90 each coordinate substrate. NAD(+)-binding positions include S103, 120 to 122 (ASN), and S145. 122 to 125 (NPVD) provides a ligand contact to substrate. Residue 150–153 (DSAR) coordinates substrate. The Proton acceptor role is filled by H177. A Phosphotyrosine modification is found at Y220. Residue T229 coordinates substrate.

It belongs to the LDH/MDH superfamily. LDH family. As to quaternary structure, homotetramer.

The protein resides in the cytoplasm. It catalyses the reaction (S)-lactate + NAD(+) = pyruvate + NADH + H(+). It functions in the pathway fermentation; pyruvate fermentation to lactate; (S)-lactate from pyruvate: step 1/1. In terms of biological role, catalyzes the conversion of lactate to pyruvate. In Mycoplasma genitalium (strain ATCC 33530 / DSM 19775 / NCTC 10195 / G37) (Mycoplasmoides genitalium), this protein is L-lactate dehydrogenase.